A 94-amino-acid chain; its full sequence is NADH dehydrogenase [ubiquinone] iron-sulfur protein 3, mitochondrial (94 aa).

The protein belongs to the complex I 30 kDa subunit family. Core subunit of respiratory chain NADH dehydrogenase (Complex I) which is composed of 45 different subunits. Interacts with NDUFAF3. Interacts with RAB5IF. Found in subcomplexes containing subunits NDUFS2, MT-ND1 and NDUFA13.

It is found in the mitochondrion inner membrane. It carries out the reaction a ubiquinone + NADH + 5 H(+)(in) = a ubiquinol + NAD(+) + 4 H(+)(out). Core subunit of the mitochondrial membrane respiratory chain NADH dehydrogenase (Complex I) which catalyzes electron transfer from NADH through the respiratory chain, using ubiquinone as an electron acceptor. Essential for the catalytic activity and assembly of complex I. The protein is NADH dehydrogenase [ubiquinone] iron-sulfur protein 3, mitochondrial of Mesocricetus auratus (Golden hamster).